We begin with the raw amino-acid sequence, 259 residues long: tRNA pseudouridine synthase A (259 aa).

Aspartate 52 functions as the Nucleophile in the catalytic mechanism. Tyrosine 111 is a substrate binding site.

This sequence belongs to the tRNA pseudouridine synthase TruA family. In terms of assembly, homodimer.

It catalyses the reaction uridine(38/39/40) in tRNA = pseudouridine(38/39/40) in tRNA. Formation of pseudouridine at positions 38, 39 and 40 in the anticodon stem and loop of transfer RNAs. The polypeptide is tRNA pseudouridine synthase A (Ruegeria sp. (strain TM1040) (Silicibacter sp.)).